The following is a 317-amino-acid chain: Lipoyl synthase (317 aa).

Residues M1 to T22 form a disordered region. A compositionally biased stretch (basic and acidic residues) spans R12–T22. [4Fe-4S] cluster-binding residues include C57, C62, C68, C83, C87, C90, and S296. In terms of domain architecture, Radical SAM core spans W69–L285.

It belongs to the radical SAM superfamily. Lipoyl synthase family. [4Fe-4S] cluster serves as cofactor.

The protein resides in the cytoplasm. It catalyses the reaction [[Fe-S] cluster scaffold protein carrying a second [4Fe-4S](2+) cluster] + N(6)-octanoyl-L-lysyl-[protein] + 2 oxidized [2Fe-2S]-[ferredoxin] + 2 S-adenosyl-L-methionine + 4 H(+) = [[Fe-S] cluster scaffold protein] + N(6)-[(R)-dihydrolipoyl]-L-lysyl-[protein] + 4 Fe(3+) + 2 hydrogen sulfide + 2 5'-deoxyadenosine + 2 L-methionine + 2 reduced [2Fe-2S]-[ferredoxin]. Its pathway is protein modification; protein lipoylation via endogenous pathway; protein N(6)-(lipoyl)lysine from octanoyl-[acyl-carrier-protein]: step 2/2. In terms of biological role, catalyzes the radical-mediated insertion of two sulfur atoms into the C-6 and C-8 positions of the octanoyl moiety bound to the lipoyl domains of lipoate-dependent enzymes, thereby converting the octanoylated domains into lipoylated derivatives. This chain is Lipoyl synthase, found in Azorhizobium caulinodans (strain ATCC 43989 / DSM 5975 / JCM 20966 / LMG 6465 / NBRC 14845 / NCIMB 13405 / ORS 571).